The primary structure comprises 182 residues: Large ribosomal subunit protein uL10 (182 aa).

This sequence belongs to the universal ribosomal protein uL10 family. In terms of assembly, part of the ribosomal stalk of the 50S ribosomal subunit. The N-terminus interacts with L11 and the large rRNA to form the base of the stalk. The C-terminus forms an elongated spine to which L12 dimers bind in a sequential fashion forming a multimeric L10(L12)X complex.

In terms of biological role, forms part of the ribosomal stalk, playing a central role in the interaction of the ribosome with GTP-bound translation factors. The sequence is that of Large ribosomal subunit protein uL10 from Chloroflexus aurantiacus (strain ATCC 29364 / DSM 637 / Y-400-fl).